The primary structure comprises 337 residues: Phenylalanine--tRNA ligase alpha subunit (337 aa).

Glutamate 258 contributes to the Mg(2+) binding site.

The protein belongs to the class-II aminoacyl-tRNA synthetase family. Phe-tRNA synthetase alpha subunit type 1 subfamily. As to quaternary structure, tetramer of two alpha and two beta subunits. Requires Mg(2+) as cofactor.

The protein localises to the cytoplasm. It catalyses the reaction tRNA(Phe) + L-phenylalanine + ATP = L-phenylalanyl-tRNA(Phe) + AMP + diphosphate + H(+). The chain is Phenylalanine--tRNA ligase alpha subunit from Paraburkholderia phytofirmans (strain DSM 17436 / LMG 22146 / PsJN) (Burkholderia phytofirmans).